Consider the following 31-residue polypeptide: Protamine-Z (31 aa).

Positions 1 to 31 (ARRRRSRRASRPVRRRRPRRVSRRRRARRRR) are disordered.

As to expression, testis.

The protein resides in the nucleus. The protein localises to the chromosome. Protamines substitute for histones in the chromatin of sperm during the haploid phase of spermatogenesis. They compact sperm DNA into a highly condensed, stable and inactive complex. This Clupea harengus (Atlantic herring) protein is Protamine-Z.